The following is a 618-amino-acid chain: Membrane protein insertase YidC (618 aa).

6 helical membrane-spanning segments follow: residues 3-23 (KNTITGLVLIGILLVGFSFLS), 363-383 (WGLSMGIVLLLLTIMVKIVVF), 439-459 (LPMLLQFPILMALFMFVPSAI), 478-498 (FITFPFHIPFLGNHLSLFCLL), 520-540 (PQMAAMKWMMYLMPIMFLFVL), and 545-565 (SGLNYYYFISTLISVVTMIIL).

Belongs to the OXA1/ALB3/YidC family. Type 1 subfamily. Interacts with the Sec translocase complex via SecD. Specifically interacts with transmembrane segments of nascent integral membrane proteins during membrane integration.

It is found in the cell membrane. Required for the insertion and/or proper folding and/or complex formation of integral membrane proteins into the membrane. Involved in integration of membrane proteins that insert both dependently and independently of the Sec translocase complex, as well as at least some lipoproteins. Aids folding of multispanning membrane proteins. This Bacteroides fragilis (strain YCH46) protein is Membrane protein insertase YidC.